We begin with the raw amino-acid sequence, 590 residues long: Ankyrin repeat-containing protein ITN1 (590 aa).

The interval 25–44 is disordered; that stretch reads ENQNPMIDPSPTPSPSATAT. ANK repeat units lie at residues 73-102, 128-157, 163-192, 197-226, 231-260, 265-294, and 299-329; these read HNDT…SQME, LGET…RESI, SGYD…TLSQ, SNAT…NLLE, NNKN…QLAR, KGQT…AIVM, and SCNT…NANT. The next 4 membrane-spanning stretches (helical) occupy residues 422–442, 460–480, 500–520, and 531–551; these read VTVV…TVPG, IFFI…VVQI, LMWL…YIVV, and VTVV…YYVV.

Interacts with REM19/RTV1. As to expression, expressed in roots, shoots, leaf vasculature and stems.

The protein resides in the cell membrane. Its function is as follows. Involved in salt stress tolerance. May act through abscisic acid (ABA) signaling pathways and promote reactive oxygen species (ROS) production. This Arabidopsis thaliana (Mouse-ear cress) protein is Ankyrin repeat-containing protein ITN1.